Here is a 644-residue protein sequence, read N- to C-terminus: Chaperone protein DnaK (644 aa).

A Phosphothreonine; by autocatalysis modification is found at Thr199. The segment covering 550-584 (ADKLDESEKQRAQDEIKRGREAMESGDLERMKASR) has biased composition (basic and acidic residues). Disordered stretches follow at residues 550 to 586 (ADKL…SRDS) and 599 to 644 (YSQA…EDKK). Low complexity predominate over residues 600–623 (SQAGPEQGAPGAEAGAGASQGASG).

It belongs to the heat shock protein 70 family.

Its function is as follows. Acts as a chaperone. This is Chaperone protein DnaK from Leptospira biflexa serovar Patoc (strain Patoc 1 / Ames).